The following is a 166-amino-acid chain: Large ribosomal subunit protein uL10 (166 aa).

This sequence belongs to the universal ribosomal protein uL10 family. Part of the ribosomal stalk of the 50S ribosomal subunit. The N-terminus interacts with L11 and the large rRNA to form the base of the stalk. The C-terminus forms an elongated spine to which L12 dimers bind in a sequential fashion forming a multimeric L10(L12)X complex.

Forms part of the ribosomal stalk, playing a central role in the interaction of the ribosome with GTP-bound translation factors. The polypeptide is Large ribosomal subunit protein uL10 (Listeria innocua serovar 6a (strain ATCC BAA-680 / CLIP 11262)).